The following is a 184-amino-acid chain: ATP synthase subunit b, chloroplastic (184 aa).

A helical membrane pass occupies residues 27–49 (LATNPINLSVVLGVLIFFGKGVL).

Belongs to the ATPase B chain family. As to quaternary structure, F-type ATPases have 2 components, F(1) - the catalytic core - and F(0) - the membrane proton channel. F(1) has five subunits: alpha(3), beta(3), gamma(1), delta(1), epsilon(1). F(0) has four main subunits: a(1), b(1), b'(1) and c(10-14). The alpha and beta chains form an alternating ring which encloses part of the gamma chain. F(1) is attached to F(0) by a central stalk formed by the gamma and epsilon chains, while a peripheral stalk is formed by the delta, b and b' chains.

It is found in the plastid. The protein resides in the chloroplast thylakoid membrane. F(1)F(0) ATP synthase produces ATP from ADP in the presence of a proton or sodium gradient. F-type ATPases consist of two structural domains, F(1) containing the extramembraneous catalytic core and F(0) containing the membrane proton channel, linked together by a central stalk and a peripheral stalk. During catalysis, ATP synthesis in the catalytic domain of F(1) is coupled via a rotary mechanism of the central stalk subunits to proton translocation. Functionally, component of the F(0) channel, it forms part of the peripheral stalk, linking F(1) to F(0). The polypeptide is ATP synthase subunit b, chloroplastic (Chloranthus spicatus (Chulantree)).